We begin with the raw amino-acid sequence, 290 residues long: 2-dehydro-3-deoxyphosphooctonate aldolase 1 (290 aa).

Residue A2 is modified to N-acetylalanine.

Belongs to the KdsA family. As to expression, expressed in shoots.

The protein localises to the cytoplasm. The enzyme catalyses D-arabinose 5-phosphate + phosphoenolpyruvate + H2O = 3-deoxy-alpha-D-manno-2-octulosonate-8-phosphate + phosphate. Catalyzes the stereospecific condensation of D-arabinose 5-phosphate and phosphoenolpyruvate to form 3-deoxy-D-manno-octulosonate 8-phosphate (KDO-8-phosphate) and inorganic phosphate. Involved in the biosynthesis of 3-deoxy-D-manno-octulosonate (KDO) which is an indispensable component of rhamnogalacturonan II (RG-II), a structurally complex pectic polysaccharide of the primary cell wall. RG-II is essential for the cell wall integrity of rapidly growing tissues and pollen tube growth and elongation. This is 2-dehydro-3-deoxyphosphooctonate aldolase 1 (KDSA1) from Arabidopsis thaliana (Mouse-ear cress).